A 370-amino-acid chain; its full sequence is tRNA-specific 2-thiouridylase MnmA (370 aa).

ATP contacts are provided by residues 11–18 (GMSGGVDS) and Met-37. Residues 97–99 (NPD) form an interaction with target base in tRNA region. The active-site Nucleophile is Cys-102. A disulfide bridge links Cys-102 with Cys-199. Residue Gly-126 participates in ATP binding. The interaction with tRNA stretch occupies residues 149–151 (KDQ). Residue Cys-199 is the Cysteine persulfide intermediate of the active site. Residues 307-308 (RY) are interaction with tRNA.

Belongs to the MnmA/TRMU family.

It is found in the cytoplasm. The catalysed reaction is S-sulfanyl-L-cysteinyl-[protein] + uridine(34) in tRNA + AH2 + ATP = 2-thiouridine(34) in tRNA + L-cysteinyl-[protein] + A + AMP + diphosphate + H(+). Its function is as follows. Catalyzes the 2-thiolation of uridine at the wobble position (U34) of tRNA, leading to the formation of s(2)U34. This chain is tRNA-specific 2-thiouridylase MnmA, found in Staphylococcus saprophyticus subsp. saprophyticus (strain ATCC 15305 / DSM 20229 / NCIMB 8711 / NCTC 7292 / S-41).